Consider the following 130-residue polypeptide: Histone H2A type 1 (130 aa).

Residues 1–22 (MSGRGKQGGKARAKAKTRSSRA) form a disordered region. Serine 2 is modified (N-acetylserine). Serine 2 bears the Phosphoserine; by RPS6KA5 mark. Residue arginine 4 is modified to Citrulline; alternate. Arginine 4 bears the Symmetric dimethylarginine; by PRMT5; alternate mark. An N6-(2-hydroxyisobutyryl)lysine modification is found at lysine 6. Basic residues predominate over residues 7–19 (QGGKARAKAKTRS). Lysine 10 is modified (N6-(2-hydroxyisobutyryl)lysine; alternate). Lysine 10 carries the N6-lactoyllysine; alternate modification. N6-succinyllysine; alternate is present on lysine 10. Glycyl lysine isopeptide (Lys-Gly) (interchain with G-Cter in ubiquitin) cross-links involve residues lysine 14 and lysine 16. An N6-(2-hydroxyisobutyryl)lysine; alternate modification is found at lysine 37. Lysine 37 is modified (N6-(beta-hydroxybutyryl)lysine; alternate). Lysine 37 carries the post-translational modification N6-crotonyllysine; alternate. Lysine 75 and lysine 76 each carry N6-(2-hydroxyisobutyryl)lysine. The residue at position 96 (lysine 96) is an N6-(2-hydroxyisobutyryl)lysine; alternate. At lysine 96 the chain carries N6-succinyllysine; alternate. Lysine 96 is subject to N6-glutaryllysine; alternate. Lysine 100 carries the N6-glutaryllysine modification. Glutamine 105 carries the N5-methylglutamine modification. An N6-(2-hydroxyisobutyryl)lysine; alternate modification is found at lysine 119. N6-crotonyllysine; alternate is present on residues lysine 119 and lysine 120. Residues lysine 119 and lysine 120 each carry the N6-glutaryllysine; alternate modification. A Glycyl lysine isopeptide (Lys-Gly) (interchain with G-Cter in ubiquitin); alternate cross-link involves residue lysine 120. Threonine 121 carries the phosphothreonine; by DCAF1 modification. An N6-crotonyllysine; alternate modification is found at lysine 126. The residue at position 126 (lysine 126) is an N6-glutaryllysine; alternate.

The protein belongs to the histone H2A family. The nucleosome is a histone octamer containing two molecules each of H2A, H2B, H3 and H4 assembled in one H3-H4 heterotetramer and two H2A-H2B heterodimers. The octamer wraps approximately 147 bp of DNA. Interacts with VRK1; the interaction is mediated by the nucleosome acidic patch, a cluster of negatively charged residues of H2A and H2B forming a cleft within the nucleosome core. Deiminated on Arg-4 in granulocytes upon calcium entry. Post-translationally, monoubiquitination of Lys-120 (H2AK119Ub) by RING1, TRIM37 and RNF2/RING2 complex gives a specific tag for epigenetic transcriptional repression and participates in X chromosome inactivation of female mammals. It is involved in the initiation of both imprinted and random X inactivation. Ubiquitinated H2A is enriched in inactive X chromosome chromatin. Ubiquitination of H2A functions downstream of methylation of 'Lys-27' of histone H3 (H3K27me). H2AK119Ub by RNF2/RING2 can also be induced by ultraviolet and may be involved in DNA repair. Following DNA double-strand breaks (DSBs), it is ubiquitinated through 'Lys-63' linkage of ubiquitin moieties by the E2 ligase UBE2N and the E3 ligases RNF8 and RNF168, leading to the recruitment of repair proteins to sites of DNA damage. Ubiquitination at Lys-14 and Lys-16 (H2AK13Ub and H2AK15Ub, respectively) in response to DNA damage is initiated by RNF168 that mediates monoubiquitination at these 2 sites, and 'Lys-63'-linked ubiquitin are then conjugated to monoubiquitin; RNF8 is able to extend 'Lys-63'-linked ubiquitin chains in vitro. H2AK119Ub and ionizing radiation-induced 'Lys-63'-linked ubiquitination (H2AK13Ub and H2AK15Ub) are distinct events. In terms of processing, phosphorylation on Ser-2 (H2AS1ph) is enhanced during mitosis. Phosphorylation on Ser-2 by RPS6KA5/MSK1 directly represses transcription. Acetylation of H3 inhibits Ser-2 phosphorylation by RPS6KA5/MSK1. Phosphorylation at Thr-121 (H2AT120ph) by DCAF1 is present in the regulatory region of many tumor suppresor genes and down-regulates their transcription. Symmetric dimethylation on Arg-4 by the PRDM1/PRMT5 complex may play a crucial role in the germ-cell lineage. Post-translationally, glutamine methylation at Gln-105 (H2AQ104me) by FBL is specifically dedicated to polymerase I. It is present at 35S ribosomal DNA locus and impairs binding of the FACT complex. In terms of processing, crotonylation (Kcr) is specifically present in male germ cells and marks testis-specific genes in post-meiotic cells, including X-linked genes that escape sex chromosome inactivation in haploid cells. Crotonylation marks active promoters and enhancers and confers resistance to transcriptional repressors. It is also associated with post-meiotically activated genes on autosomes. Lactylated in macrophages by EP300/P300 by using lactoyl-CoA directly derived from endogenous or exogenous lactate, leading to stimulates gene transcription.

It localises to the nucleus. It is found in the chromosome. In terms of biological role, core component of nucleosome. Nucleosomes wrap and compact DNA into chromatin, limiting DNA accessibility to the cellular machineries which require DNA as a template. Histones thereby play a central role in transcription regulation, DNA repair, DNA replication and chromosomal stability. DNA accessibility is regulated via a complex set of post-translational modifications of histones, also called histone code, and nucleosome remodeling. This chain is Histone H2A type 1, found in Bos taurus (Bovine).